The following is a 2348-amino-acid chain: Transcription factor HIVEP3 (2348 aa).

Residues 1–105 are disordered; the sequence is MDPDQSIKGT…AFMSPGKPEH (105 aa). Polar residues predominate over residues 27–72; the sequence is IQTSVSSSAPYPGSGTTAPSESATQELLATQPFSGPSQEKTGQQQK. 2 consecutive C2H2-type zinc fingers follow at residues 185–207 and 213–235; these read YICQ…IRSH and YPCG…RKSH. Positions 185–235 are ZAS1; that stretch reads YICQYCSRPCAKPSVLQKHIRSHTGERPYPCGPCGFSFKTKSNLYKHRKSH. The tract at residues 204 to 1055 is no DNA binding activity or transactivation activity, but complete prevention of TRAF-dependent NF-Kappa-B activation; associates with TRAF2 and JUN; it reads IRSHTGERPY…KGKQESSEEP (852 aa). Disordered regions lie at residues 239-401, 475-532, and 561-628; these read IKAG…SPPN, DSVK…PLLR, and ADPE…TKKG. An acidic 1 region spans residues 257 to 280; the sequence is EMERIPGEEFEEPTEGESTDSEEE. Residues 264 to 281 are compositionally biased toward acidic residues; sequence EEFEEPTEGESTDSEEET. A compositionally biased stretch (low complexity) spans 298 to 323; the sequence is PLLSSSLYSSGSHGSSQERCSLSQSS. Residues 338–352 show a composition bias toward basic and acidic residues; it reads SSEHPLSHKPEDTHT. Composition is skewed to polar residues over residues 372–401 and 485–495; these read TFLS…SPPN and TRRSSVESPKS. Composition is skewed to low complexity over residues 513 to 527 and 589 to 605; these read QSLL…STHP and PLGG…SSKD. The span at 606–623 shows a compositional bias: basic and acidic residues; the sequence is PTSKPSDEPEPKESDLTK. A CCHC HIVEP-type zinc finger spans residues 633 to 663; the sequence is GANYECTICGARYKKRDNYEAHKKYYCSELQ. 5 disordered regions span residues 692–1098, 1229–1274, 1386–1427, 1441–1555, and 1654–1694; these read KLGA…PPYT, LPPV…TSAP, EGCS…KADE, STED…EGTD, and EVHL…GEPA. The span at 736 to 749 shows a compositional bias: low complexity; sequence STKSPAEASKSAPS. Residues 844 to 865 are acidic 2; sequence EEPDRPDTEPEPPPKEPEKTEE. The segment covering 845–865 has biased composition (basic and acidic residues); the sequence is EPDRPDTEPEPPPKEPEKTEE. The short motif at 885-891 is the Nuclear localization signal element; it reads PKKKRLR. Over residues 893-929 the composition is skewed to low complexity; the sequence is AEMAQSSGESSFESSVPLSRSPSQESSISLSGSSRSA. The segment covering 930 to 939 has biased composition (basic and acidic residues); sequence SFDREDHGKA. 3 stretches are compositionally biased toward polar residues: residues 975–985, 1062–1073, and 1247–1256; these read SEQSPNVPHSS, TKSSVPQISVGT, and SSSTEYSSDI. Residues 1409-1433 adopt a coiled-coil conformation; that stretch reads METQQQKRVKEEEASKADEKLELVS. 3 stretches are compositionally biased toward basic and acidic residues: residues 1416 to 1427, 1442 to 1452, and 1518 to 1527; these read RVKEEEASKADE, TEDRKKTEKPH, and VKKEDPKEQT. The span at 1538–1547 shows a compositional bias: low complexity; the sequence is LPLSDTSPKP. Basic and acidic residues predominate over residues 1665–1694; the sequence is SQKDPARVEKEEKQGKAEEGTPTSKRGEPA. 2 consecutive C2H2-type zinc fingers follow at residues 1720–1742 and 1748–1772; these read YVCE…IRTH and YVCK…SKAH. The tract at residues 1720–1772 is ZAS2; that stretch reads YVCEECGIRCKKPSMLKKHIRTHTDVRPYVCKHCHFAFKTKGNLTKHMKSKAH. The tract at residues 1783–1841 is acidic 3; that stretch reads EELEAEEGTSDDLHQDSEGQEGAEAVEEHQFSDLEDSDSDSDLDEDEEEEEEEEESQDE. Disordered regions lie at residues 1786–1990 and 2009–2038; these read EAEE…HLCG and PAGL…ESPP. The segment covering 1815–1840 has biased composition (acidic residues); the sequence is DLEDSDSDSDLDEDEEEEEEEEESQD. Over residues 1871 to 1902 the composition is skewed to polar residues; sequence PDSTSDEVPQGSSISEATHLTASSCSTPSRGT. Repeat copies occupy residues 1897–1900, 1927–1930, 1933–1936, 1961–1964, and 2024–2027. A compositionally biased stretch (polar residues) spans 1952 to 1961; the sequence is KNDSSPQQCS. The segment at 2053–2148 is 5 X 4 AA tandem repeats of [ST]-P-X-[RK]; sequence SPSADKSGLG…QLLSRAPCPL (96 aa). 2 disordered regions span residues 2184–2265 and 2284–2348; these read SDLT…QGHQ and KASS…PPSI. Residues 2203–2216 show a composition bias toward low complexity; the sequence is SPSASVSPVAKVSK. Polar residues predominate over residues 2293–2314; sequence RSSSMDCLAETSTYSPPRSRNL.

In terms of assembly, interacts with TRAF1 and TRAF2 as well as with JUN. Forms a multimeric complex with RUNX2 and E3 ubiquitin ligase WWP1. In terms of processing, phosphorylated on threonine and serine residues. Phosphorylation by cyclin-dependent kinase CDK1 decreases HIVEP3 DNA binding affinity, and by epidermal growth factor receptor kinase increases its DNA binding affinity. As to expression, expressed in macrophages, lymphocytes, brain, thymus, spleen and bone marrow. Expressed in osteoblasts, whole bone and, to a lesser extent, in osteoclasts.

Its subcellular location is the cytoplasm. The protein resides in the nucleus. In terms of biological role, plays a role of transcription factor; binds to recognition signal sequences (Rss heptamer) for somatic recombination of immunoglobulin and T-cell receptor gene segments; Also binds to the kappa-B motif of gene such as S100A4, involved in cell progression and differentiation. Kappa-B motif is a gene regulatory element found in promoters and enhancers of genes involved in immunity, inflammation, and growth and that responds to viral antigens, mitogens, and cytokines. Involvement of HIVEP3 in cell growth is strengthened by the fact that its down-regulation promotes cell cycle progression with ultimate formation of multinucleated giant cells. Strongly inhibits TNF-alpha-induced NF-kappa-B activation; Interferes with nuclear factor NF-kappa-B by several mechanisms: as transcription factor, by competing for Kappa-B motif and by repressing transcription in the nucleus; through a non transcriptional process, by inhibiting nuclear translocation of RELA by association with TRAF2, an adapter molecule in the tumor necrosis factor signaling, which blocks the formation of IKK complex. Interaction with TRAF proteins inhibits both NF-Kappa-B-mediated and c-Jun N-terminal kinase/JNK-mediated responses that include apoptosis and pro-inflammatory cytokine gene expression. Positively regulates the expression of IL2 in T-cell. Essential regulator of adult bone formation. The chain is Transcription factor HIVEP3 (Hivep3) from Mus musculus (Mouse).